The following is a 663-amino-acid chain: DNA ligase (663 aa).

NAD(+)-binding positions include 33-37 (DQEFD), 82-83 (SL), and Glu-113. Residue Lys-115 is the N6-AMP-lysine intermediate of the active site. NAD(+) contacts are provided by Arg-136, Glu-170, Lys-286, and Lys-310. Zn(2+) is bound by residues Cys-404, Cys-407, Cys-422, and Cys-427. The region spanning 587-663 (SSDPSLTGKL…IEESDLEDFL (77 aa)) is the BRCT domain.

It belongs to the NAD-dependent DNA ligase family. LigA subfamily. It depends on Mg(2+) as a cofactor. The cofactor is Mn(2+).

The enzyme catalyses NAD(+) + (deoxyribonucleotide)n-3'-hydroxyl + 5'-phospho-(deoxyribonucleotide)m = (deoxyribonucleotide)n+m + AMP + beta-nicotinamide D-nucleotide.. Its function is as follows. DNA ligase that catalyzes the formation of phosphodiester linkages between 5'-phosphoryl and 3'-hydroxyl groups in double-stranded DNA using NAD as a coenzyme and as the energy source for the reaction. It is essential for DNA replication and repair of damaged DNA. In Natranaerobius thermophilus (strain ATCC BAA-1301 / DSM 18059 / JW/NM-WN-LF), this protein is DNA ligase.